The following is a 98-amino-acid chain: Co-chaperonin GroES (98 aa).

Belongs to the GroES chaperonin family. In terms of assembly, heptamer of 7 subunits arranged in a ring. Interacts with the chaperonin GroEL.

Its subcellular location is the cytoplasm. Together with the chaperonin GroEL, plays an essential role in assisting protein folding. The GroEL-GroES system forms a nano-cage that allows encapsulation of the non-native substrate proteins and provides a physical environment optimized to promote and accelerate protein folding. GroES binds to the apical surface of the GroEL ring, thereby capping the opening of the GroEL channel. This is Co-chaperonin GroES from Kineococcus radiotolerans (strain ATCC BAA-149 / DSM 14245 / SRS30216).